The following is a 375-amino-acid chain: Trans-enoyl reductase cghC (375 aa).

V48–K51 is a binding site for NADP(+). N135–W142 serves as a coordination point for substrate. Residues S188–T191, S211–N214, and L276–D277 contribute to the NADP(+) site. Position 297-301 (G297–V301) interacts with substrate. V366–S367 contacts NADP(+).

Belongs to the zinc-containing alcohol dehydrogenase family. In terms of assembly, monomer.

It carries out the reaction (2S,4S)-4-hydroxy-4-methylglutamate + 8 malonyl-CoA + 3 S-adenosyl-L-methionine + ATP + 8 NADPH + 11 H(+) = (2S)-3-[(2S)-3,5-dioxo-4-[(2E,4R,6R,8E,10E,12E)-4,6,12-trimethyltetradeca-2,8,10,12-tetraenoyl]pyrrolidin-2-yl]-2-hydroxy-2-methylpropanoate + AMP + 3 S-adenosyl-L-homocysteine + 8 CO2 + diphosphate + 8 NADP(+) + 8 CoA + 6 H2O. Its pathway is secondary metabolite biosynthesis. Trans-enoyl reductase; part of the gene cluster that mediates the biosynthesis of the tetramic acid Sch210972, a potential anti-HIV fungal natural product that contains a decalin core. The PKS module of cghG together with the enoylreductase cghC catalyze the formation of the polyketide unit which is then conjugated to 4-hydroxyl-4-methyl glutamate (HMG) by the condensation domain of the cghG NRPS module. One unique structural feature of Sch210972 is the tetramic acid motif proposed to be derived from the non-proteinogenic amino acid HMG, by a Dieckmann-type condensation catalyzed by the reductase domain of cghG. The aldolase cghB catalyzes the aldol condensation of 2 molecules of pyruvic acid to yield the intermediate 4-hydroxyl-4-methyl-2-oxoglutarate (HMOG), which can then be stereoselectively transaminated by an unidentified enzyme to form HMG. The Diels-Alderase cghA then uses the Dieckmann product released by cghG as substrate and catalyzes the Diels-Alder cycloaddition to form the decalin ring of Sch210972. CghA also suppresses the nonenzymatic formation of the alternative stereoisomer. This Chaetomium globosum (strain ATCC 6205 / CBS 148.51 / DSM 1962 / NBRC 6347 / NRRL 1970) (Soil fungus) protein is Trans-enoyl reductase cghC.